The following is a 919-amino-acid chain: Calcium-transporting ATPase type 2C member 1 (919 aa).

The Cytoplasmic segment spans residues 1 to 70 (MKVARFQKIP…NEFDISEDEP (70 aa)). The chain crosses the membrane as a helical span at residues 71–91 (LWKKYISQFKNPLIMLLLASA). At 92 to 104 (VISVLMHQFDDAV) the chain is on the lumenal side. Residues 105 to 123 (SITVAILIVVTVAFVQEYR) traverse the membrane as a helical segment. Residues 124–262 (SEKSLEELSK…APKTPLQKSM (139 aa)) lie on the Cytoplasmic side of the membrane. A helical transmembrane segment spans residues 263-282 (DLLGKQLSFYSFGIIGIIML). The Lumenal portion of the chain corresponds to 283–294 (VGWLLGKDILEM). A helical transmembrane segment spans residues 295–312 (FTISVSLAVAAIPEGLPI). Residues Val-303, Ala-304, Ile-306, and Glu-308 each coordinate Ca(2+). Topologically, residues 313–699 (VVTVTLALGV…EEGKGIYNNI (387 aa)) are cytoplasmic. The active-site 4-aspartylphosphate intermediate is Asp-350. The Mg(2+) site is built by Asp-644 and Asp-648. A helical membrane pass occupies residues 700 to 719 (KNFVRFQLSTSIAALTLISL). The Lumenal segment spans residues 720–729 (ATLMNFPNPL). The chain crosses the membrane as a helical span at residues 730-750 (NAMQILWINIIMDGPPAQSLG). Positions 738 and 742 each coordinate Ca(2+). The Cytoplasmic portion of the chain corresponds to 751 to 770 (VEPVDKDVIRKPPRNWKDSI). A helical membrane pass occupies residues 771-793 (LTKNLILKILVSSIIIVCGTLFV). The Lumenal segment spans residues 794-808 (FWRELRDNVITPRDT). A helical transmembrane segment spans residues 809–828 (TMTFTCFVFFDMFNALSSRS). At 829–841 (QTKSVFEIGLCSN) the chain is on the cytoplasmic side. Residues 842 to 860 (RMFCYAVLGSIMGQLLVIY) traverse the membrane as a helical segment. The Lumenal portion of the chain corresponds to 861 to 875 (FPPLQKVFQTESLSI). Residues 876–896 (LDLLFLLGLTSSVCIVAEIIK) form a helical membrane-spanning segment. The Cytoplasmic portion of the chain corresponds to 897 to 919 (KVERSREKIQKHVSSTSSSFLEV).

It belongs to the cation transport ATPase (P-type) (TC 3.A.3) family. Type IIA subfamily. In terms of assembly, monomer. Homodimer. In terms of tissue distribution, found in most tissues except colon, thymus, spleen and leukocytes. Expressed in keratinocytes (at protein level).

It is found in the golgi apparatus. Its subcellular location is the trans-Golgi network membrane. It localises to the golgi stack membrane. The catalysed reaction is Ca(2+)(in) + ATP + H2O = Ca(2+)(out) + ADP + phosphate + H(+). It catalyses the reaction Mn(2+)(in) + ATP + H2O = Mn(2+)(out) + ADP + phosphate + H(+). In terms of biological role, ATP-driven pump that supplies the Golgi apparatus with Ca(2+) and Mn(2+) ions, both essential cofactors for processing and trafficking of newly synthesized proteins in the secretory pathway. Within a catalytic cycle, acquires Ca(2+) or Mn(2+) ions on the cytoplasmic side of the membrane and delivers them to the lumenal side. The transfer of ions across the membrane is coupled to ATP hydrolysis and is associated with a transient phosphorylation that shifts the pump conformation from inward-facing to outward-facing state. Plays a primary role in the maintenance of Ca(2+) homeostasis in the trans-Golgi compartment with a functional impact on Golgi and post-Golgi protein sorting as well as a structural impact on cisternae morphology. Responsible for loading the Golgi stores with Ca(2+) ions in keratinocytes, contributing to keratinocyte differentiation and epidermis integrity. Participates in Ca(2+) and Mn(2+) ions uptake into the Golgi store of hippocampal neurons and regulates protein trafficking required for neural polarity. May also play a role in the maintenance of Ca(2+) and Mn(2+) homeostasis and signaling in the cytosol while preventing cytotoxicity. The polypeptide is Calcium-transporting ATPase type 2C member 1 (Homo sapiens (Human)).